A 315-amino-acid chain; its full sequence is D-alanine--D-alanine ligase B (315 aa).

The ATP-grasp domain maps to 109–309 (KKVAAAAGVV…FAELLSWMVE (201 aa)). An ATP-binding site is contributed by 135–190 (PMKPPYVVKPVREGSSFGVVIVKEDQPHPPQVIGSADWKYGDEVMVEGYIAGRELT). Residues Asp259, Glu276, and Asn278 each contribute to the Mg(2+) site.

This sequence belongs to the D-alanine--D-alanine ligase family. The cofactor is Mg(2+). Mn(2+) serves as cofactor.

It localises to the cytoplasm. The catalysed reaction is 2 D-alanine + ATP = D-alanyl-D-alanine + ADP + phosphate + H(+). Its pathway is cell wall biogenesis; peptidoglycan biosynthesis. Functionally, cell wall formation. This Brucella melitensis biotype 1 (strain ATCC 23456 / CCUG 17765 / NCTC 10094 / 16M) protein is D-alanine--D-alanine ligase B.